A 293-amino-acid polypeptide reads, in one-letter code: tRNA pseudouridine synthase B (293 aa).

The Nucleophile role is filled by Asp38.

The protein belongs to the pseudouridine synthase TruB family. Type 1 subfamily.

It catalyses the reaction uridine(55) in tRNA = pseudouridine(55) in tRNA. Responsible for synthesis of pseudouridine from uracil-55 in the psi GC loop of transfer RNAs. The chain is tRNA pseudouridine synthase B from Trichormus variabilis (strain ATCC 29413 / PCC 7937) (Anabaena variabilis).